Here is a 180-residue protein sequence, read N- to C-terminus: Guanosine-3',5'-bis(diphosphate) 3'-pyrophosphohydrolase MESH1 (180 aa).

One can recognise an HD domain in the interval 33-128; sequence YINHPIGVAR…VKLADKLYNL (96 aa). 3 residues coordinate Mn(2+): H36, H62, and D63. Catalysis depends on nucleophile residues E66 and D67. D123 contributes to the Mn(2+) binding site.

The protein belongs to the MESH1 family. Requires Mn(2+) as cofactor.

The enzyme catalyses guanosine 3',5'-bis(diphosphate) + H2O = GDP + diphosphate + H(+). PpGpp hydrolyzing enzyme involved in starvation response. The protein is Guanosine-3',5'-bis(diphosphate) 3'-pyrophosphohydrolase MESH1 (hddc3) of Danio rerio (Zebrafish).